Consider the following 614-residue polypeptide: Acetylcholinesterase (614 aa).

The first 31 residues, 1–31, serve as a signal peptide directing secretion; it reads MRPPWYPLHTPSLASPLLFLLLSLLGGGARA. A disulfide bridge connects residues cysteine 100 and cysteine 127. Serine 234 functions as the Acyl-ester intermediate in the catalytic mechanism. The cysteines at positions 288 and 303 are disulfide-linked. The N-linked (GlcNAc...) asparagine glycan is linked to asparagine 296. Residue glutamate 365 is the Charge relay system of the active site. Asparagine 381 carries N-linked (GlcNAc...) asparagine glycosylation. Cysteine 440 and cysteine 560 are joined by a disulfide. Residue histidine 478 is the Charge relay system of the active site. N-linked (GlcNAc...) asparagine glycosylation occurs at asparagine 495.

It belongs to the type-B carboxylesterase/lipase family. As to quaternary structure, homotetramer; composed of disulfide-linked homodimers. Catalytic forms H (GPI-anchor dimer) and T (asymmetric collagen-tailed), which differ in their C-terminus, account for all types of known ACHE forms. Interacts with PRIMA1. The interaction with PRIMA1 is required to anchor it to the basal lamina of cells and organize into tetramers. Has been found in central nervous system and muscle. Found in embryonic liver and spleen but not in adult liver.

It localises to the synapse. The protein localises to the secreted. Its subcellular location is the cell membrane. It catalyses the reaction acetylcholine + H2O = choline + acetate + H(+). Terminates signal transduction at the neuromuscular junction by rapid hydrolysis of the acetylcholine released into the synaptic cleft. The sequence is that of Acetylcholinesterase (Ache) from Rattus norvegicus (Rat).